A 469-amino-acid polypeptide reads, in one-letter code: Adenosylhomocysteinase (469 aa).

The substrate site is built by Thr-58, Asp-133, and Glu-195. Residue 196 to 198 (TTT) coordinates NAD(+). Lys-225 and Asp-229 together coordinate substrate. Residues Asn-230, 259 to 264 (GFGDVG), Glu-282, Asn-317, 338 to 340 (IGH), and Asn-383 each bind NAD(+).

Belongs to the adenosylhomocysteinase family. NAD(+) is required as a cofactor.

The protein localises to the cytoplasm. It carries out the reaction S-adenosyl-L-homocysteine + H2O = L-homocysteine + adenosine. Its pathway is amino-acid biosynthesis; L-homocysteine biosynthesis; L-homocysteine from S-adenosyl-L-homocysteine: step 1/1. Functionally, may play a key role in the regulation of the intracellular concentration of adenosylhomocysteine. In Rhodopseudomonas palustris (strain TIE-1), this protein is Adenosylhomocysteinase.